Consider the following 314-residue polypeptide: Target of rapamycin complex subunit wat1 (314 aa).

WD repeat units lie at residues 1-35 (MSVQ…CSRT), 38-76 (HADS…QMPL), 81-120 (GHTN…VQRN), 122-161 (DHKS…CTHE), 165-204 (EEDV…GASL), 213-252 (AHQR…FMLE), and 257-296 (GHQR…TIRQ). Position 141 is a phosphoserine (S141).

Belongs to the WD repeat LST8 family. In terms of assembly, the target of rapamycin complex 1 (TORC1) is composed of at least mip1, pop3/wat1, tco89, toc1 and tor2. The target of rapamycin complex 2 (TORC2) is composed of at least bit61, pop3/wat1, sin1, ste20 and tor1. Interacts with prp2.

It localises to the cytoplasm. The protein resides in the nucleus. Component of both TORC1 and TORC2, which regulate multiple cellular processes to control cell growth in response to environmental signals. Nutrient limitation and environmental stress signals cause inactivation of TORC1. Active TORC1 positively controls cell growth and ribosome biogenesis by regulating ribosomal protein gene expression. TORC1 negatively controls G1 cell-cycle arrest, sexual development and amino acid uptake. Represses mating, meiosis and sporulation efficiency by interfering with the functions of the transcription factor ste11 and the meiosis-promoting RNA-binding protein mei2. TORC2 is required for cell survival under various stress conditions. TORC2 positively controls G1 cell-cycle arrest, sexual development and amino acid uptake. Positively regulates amino acid uptake through the control of expression of amino acid permeases. May play a role in mRNA maturation as a coupling protein between splicing and synthesis and/or stabilization. The protein is Target of rapamycin complex subunit wat1 of Schizosaccharomyces pombe (strain 972 / ATCC 24843) (Fission yeast).